The following is a 355-amino-acid chain: Protein RecA (355 aa).

78 to 85 (GPESSGKT) is an ATP binding site.

This sequence belongs to the RecA family.

It localises to the cytoplasm. Functionally, can catalyze the hydrolysis of ATP in the presence of single-stranded DNA, the ATP-dependent uptake of single-stranded DNA by duplex DNA, and the ATP-dependent hybridization of homologous single-stranded DNAs. It interacts with LexA causing its activation and leading to its autocatalytic cleavage. The sequence is that of Protein RecA from Rhodobacter capsulatus (Rhodopseudomonas capsulata).